A 177-amino-acid polypeptide reads, in one-letter code: Peptide methionine sulfoxide reductase MsrA (177 aa).

Cysteine 15 is a catalytic residue.

This sequence belongs to the MsrA Met sulfoxide reductase family.

The enzyme catalyses L-methionyl-[protein] + [thioredoxin]-disulfide + H2O = L-methionyl-(S)-S-oxide-[protein] + [thioredoxin]-dithiol. The catalysed reaction is [thioredoxin]-disulfide + L-methionine + H2O = L-methionine (S)-S-oxide + [thioredoxin]-dithiol. Functionally, has an important function as a repair enzyme for proteins that have been inactivated by oxidation. Catalyzes the reversible oxidation-reduction of methionine sulfoxide in proteins to methionine. This is Peptide methionine sulfoxide reductase MsrA from Listeria innocua serovar 6a (strain ATCC BAA-680 / CLIP 11262).